We begin with the raw amino-acid sequence, 151 residues long: 3-dehydroquinate dehydratase (151 aa).

The active-site Proton acceptor is tyrosine 26. Residues asparagine 77, histidine 83, and aspartate 90 each contribute to the substrate site. The active-site Proton donor is the histidine 103. Substrate is bound by residues 104 to 105 and arginine 114; that span reads LS.

This sequence belongs to the type-II 3-dehydroquinase family. Homododecamer.

It catalyses the reaction 3-dehydroquinate = 3-dehydroshikimate + H2O. It functions in the pathway metabolic intermediate biosynthesis; chorismate biosynthesis; chorismate from D-erythrose 4-phosphate and phosphoenolpyruvate: step 3/7. In terms of biological role, catalyzes a trans-dehydration via an enolate intermediate. The sequence is that of 3-dehydroquinate dehydratase from Pelodictyon phaeoclathratiforme (strain DSM 5477 / BU-1).